A 208-amino-acid polypeptide reads, in one-letter code: Protein-L-isoaspartate O-methyltransferase (208 aa).

S59 is an active-site residue.

Belongs to the methyltransferase superfamily. L-isoaspartyl/D-aspartyl protein methyltransferase family.

Its subcellular location is the cytoplasm. The enzyme catalyses [protein]-L-isoaspartate + S-adenosyl-L-methionine = [protein]-L-isoaspartate alpha-methyl ester + S-adenosyl-L-homocysteine. Catalyzes the methyl esterification of L-isoaspartyl residues in peptides and proteins that result from spontaneous decomposition of normal L-aspartyl and L-asparaginyl residues. It plays a role in the repair and/or degradation of damaged proteins. This chain is Protein-L-isoaspartate O-methyltransferase, found in Shigella sonnei (strain Ss046).